Here is a 77-residue protein sequence, read N- to C-terminus: Protein ImpC (77 aa).

This sequence belongs to the DinI family.

The protein is Protein ImpC (impC) of Salmonella typhimurium.